Consider the following 282-residue polypeptide: Bis(5'-nucleosyl)-tetraphosphatase, symmetrical (282 aa).

This sequence belongs to the Ap4A hydrolase family.

It catalyses the reaction P(1),P(4)-bis(5'-adenosyl) tetraphosphate + H2O = 2 ADP + 2 H(+). Functionally, hydrolyzes diadenosine 5',5'''-P1,P4-tetraphosphate to yield ADP. In Escherichia coli O81 (strain ED1a), this protein is Bis(5'-nucleosyl)-tetraphosphatase, symmetrical.